The sequence spans 374 residues: Phosphatidyl-myo-inositol mannosyltransferase (374 aa).

Positions 9 and 16 each coordinate GDP-alpha-D-mannose. Residues Q18, 62–63, and R68 contribute to the a 1,2-diacyl-sn-glycero-3-phospho-(1D-myo-inositol) site; that span reads YN. Residues R196, 201–202, 251–253, K256, 274–278, and E282 each bind GDP-alpha-D-mannose; these read RK, VDD, and ESFGI.

It belongs to the glycosyltransferase group 1 family. Glycosyltransferase 4 subfamily. Monomer. Mg(2+) serves as cofactor.

Its subcellular location is the cell membrane. The enzyme catalyses a 1,2-diacyl-sn-glycero-3-phospho-(1D-myo-inositol) + GDP-alpha-D-mannose = a 1,2-diacyl-sn-glycero-3-phospho-[alpha-D-mannopyranosyl-(1&lt;-&gt;6)-D-myo-inositol] + GDP + H(+). Its pathway is phospholipid metabolism; phosphatidylinositol metabolism. Its function is as follows. Involved in the biosynthesis of phosphatidyl-myo-inositol mannosides (PIM) which are early precursors in the biosynthesis of lipomannans (LM) and lipoarabinomannans (LAM). Catalyzes the addition of a mannosyl residue from GDP-D-mannose (GDP-Man) to the position 2 of the carrier lipid phosphatidyl-myo-inositol (PI) to generate a phosphatidyl-myo-inositol bearing an alpha-1,2-linked mannose residue (PIM1). The chain is Phosphatidyl-myo-inositol mannosyltransferase from Mycobacterium leprae (strain TN).